We begin with the raw amino-acid sequence, 105 residues long: Phosphoribosyl-ATP pyrophosphatase (105 aa).

This sequence belongs to the PRA-PH family.

It localises to the cytoplasm. It catalyses the reaction 1-(5-phospho-beta-D-ribosyl)-ATP + H2O = 1-(5-phospho-beta-D-ribosyl)-5'-AMP + diphosphate + H(+). Its pathway is amino-acid biosynthesis; L-histidine biosynthesis; L-histidine from 5-phospho-alpha-D-ribose 1-diphosphate: step 2/9. This is Phosphoribosyl-ATP pyrophosphatase from Roseobacter denitrificans (strain ATCC 33942 / OCh 114) (Erythrobacter sp. (strain OCh 114)).